Here is a 552-residue protein sequence, read N- to C-terminus: MPAPQPLLPLLFAFVLIHLTSETNLLPEPGSHPGMCPNQLSPHLWVDAQSTCERECTRDQDCAASEKCCTNVCGLQSCVAARFPSGGPATPETAASCEDFQCPQQGSNCDIWDGQPVCRCRDRCEKEPSFTCASDGLTYYNRCYMDAEACLRGLHLHVVPCKHILSWPPSSPGPPETTARPTPGAAPMPPALYNSPSPQAVHVGGTASLHCDVSGRPPPAVTWEKQSHQRENLIMRPDQMYGNVVVTSIGQLVLYNAQLEDAGLYTCTARNAAGLLRADFPLSVLQRATTQDRDPGVLALAECQPDTQACVGPPTPHHVLWRFDPQRGSCMTFPALKCDGAARGFETYEACQQACVRGPGDVCALPPVQGPCQGWEPRWAYSPLLQQCHPFIYSGCEGNSNNFESRESCEDACPVPRTPPCRACRLKSKLALSLCRSDFAIVGRLTEVLEEPEAAGGIARVALDDVLKDDKMGLKFLGTKYLEVTLSGMDWACPCPNVTVGDGPLVIMGEVREGVAVLDANSYVRAASEKRVKKIVELLEKKACELLNRFQD.

An N-terminal signal peptide occupies residues 1–25 (MPAPQPLLPLLFAFVLIHLTSETNL). The WAP domain occupies 29–82 (PGSHPGMCPNQLSPHLWVDAQSTCERECTRDQDCAASEKCCTNVCGLQSCVAAR). 17 cysteine pairs are disulfide-bonded: cysteine 36/cysteine 69, cysteine 52/cysteine 73, cysteine 56/cysteine 68, cysteine 62/cysteine 78, cysteine 120/cysteine 150, cysteine 124/cysteine 143, cysteine 132/cysteine 161, cysteine 211/cysteine 267, cysteine 303/cysteine 355, cysteine 310/cysteine 338, cysteine 330/cysteine 351, cysteine 363/cysteine 413, cysteine 372/cysteine 396, cysteine 388/cysteine 409, cysteine 421/cysteine 493, cysteine 424/cysteine 495, and cysteine 435/cysteine 544. Residues 112 to 163 (WDGQPVCRCRDRCEKEPSFTCASDGLTYYNRCYMDAEACLRGLHLHVVPCKH) form the Kazal-like domain. An Ig-like C2-type domain is found at 190–283 (PALYNSPSPQ…GLLRADFPLS (94 aa)). BPTI/Kunitz inhibitor domains lie at 289 to 355 (TTQD…QQAC) and 363 to 413 (CALP…EDAC). In terms of domain architecture, NTR spans 413-544 (CPVPRTPPCR…IVELLEKKAC (132 aa)). The N-linked (GlcNAc...) asparagine glycan is linked to asparagine 497.

It belongs to the WFIKKN family. As to expression, preferentially expressed in the developing inner ear and the dorsal neural tube.

It is found in the secreted. Functionally, protease-inhibitor that contains multiple distinct protease inhibitor domains. Probably has serine protease- and metalloprotease-inhibitor activity. This chain is WAP, Kazal, immunoglobulin, Kunitz and NTR domain-containing protein 1 (Wfikkn1), found in Rattus norvegicus (Rat).